The following is a 269-amino-acid chain: Phosphate import ATP-binding protein PstB (269 aa).

The ABC transporter domain occupies 14-253 (LTLEDVSISY…EFDSTKKIFS (240 aa)). 46–53 (GPSGCGKS) is an ATP binding site.

This sequence belongs to the ABC transporter superfamily. Phosphate importer (TC 3.A.1.7) family. The complex is composed of two ATP-binding proteins (PstB), two transmembrane proteins (PstC and PstA) and a solute-binding protein (PstS).

It localises to the cell inner membrane. The catalysed reaction is phosphate(out) + ATP + H2O = ADP + 2 phosphate(in) + H(+). Functionally, part of the ABC transporter complex PstSACB involved in phosphate import. Responsible for energy coupling to the transport system. This is Phosphate import ATP-binding protein PstB from Prochlorococcus marinus subsp. pastoris (strain CCMP1986 / NIES-2087 / MED4).